Consider the following 864-residue polypeptide: Structure-specific endonuclease subunit SLX4 (864 aa).

Positions 35-54 (SPLSLPSPTSLLDFLSTSTS) are enriched in low complexity. Disordered regions lie at residues 35–72 (SPLS…GKEV), 89–113 (VVSG…PGNA), 160–193 (KANQ…HIND), 288–318 (GLSD…NPPK), 348–382 (LSDE…EKKN), 413–432 (ANGH…HISN), and 625–771 (KTSN…ETLP). Residues 58–72 (ARSDTDGDKTQGKEV) show a composition bias toward basic and acidic residues. 2 stretches are compositionally biased toward polar residues: residues 160–169 (KANQTVSLQP) and 289–306 (LSDS…SATS). The segment covering 307–317 (KPRRVKAKNPP) has biased composition (basic residues). A compositionally biased stretch (polar residues) spans 659–668 (SIPQTATTQV). The span at 683–695 (VPVPSRRSTSTSK) shows a compositional bias: low complexity. Over residues 743–771 (PESFNLPTTPLTIRSGKIPSTGTASETLP) the composition is skewed to polar residues.

This sequence belongs to the SLX4 family. Forms a heterodimer with SLX1. Phosphorylated in response to DNA damage.

It is found in the nucleus. Its function is as follows. Regulatory subunit of the SLX1-SLX4 structure-specific endonuclease that resolves DNA secondary structures generated during DNA repair and recombination. Has endonuclease activity towards branched DNA substrates, introducing single-strand cuts in duplex DNA close to junctions with ss-DNA. This Paracoccidioides brasiliensis (strain Pb03) protein is Structure-specific endonuclease subunit SLX4.